The primary structure comprises 324 residues: MALTAKVKDELARLPVTKTCCRKAEVAATLRFAGGLHLVGGRIVVEAELDTGAAARRLRTALAELYGQHAELAVIAPGGLHRGNRYVVRVSRDGETLAKQTGLLDGRGRPVRGLPSQIVSGGVCDAAAAWRGAFLAHGSLTEPGRGCTLEVSCPGPESALALVGAARRLGVQAKSREVRGVERVVVRDGDAIGVLLTRLGAHDSVLAWEEYRVRREVRATANRLANFDDANVRRSARAAVTAAAKVKRALEILGDSVPEHLAAAGTLRMVHPQVSLEELGALADPPLTKDAIAGRIRRLIAMADRRADELGIPGTEAALVGELP.

Positions 275–308 (SLEELGALADPPLTKDAIAGRIRRLIAMADRRAD) form a DNA-binding region, H-T-H motif.

The protein belongs to the WhiA family.

Its function is as follows. Involved in cell division and chromosome segregation. This Acidothermus cellulolyticus (strain ATCC 43068 / DSM 8971 / 11B) protein is Probable cell division protein WhiA.